The sequence spans 257 residues: MKAVILAGGLGTRLSEETIVKPKPMVEIGGKPILWHIMKMYSVHGIKDFIICCGYKGYVIKEYFANYFLHMSDVTFHMAENRMEVHHKRVEPWNVTLVDTGDSSMTGGRLKRVAEYVKDDEAFLFTYGDGVADLDIKATIDFHKAHGKKATLTATFPPGRFGALDIRAGQVRSFQEKPKGDGAMINGGFFVLNPSVIDLIDNDATTWEQEPLMTLAQQGELMAFEHPGFWQPMDTLRDKVYLEGLWEKGKAPWKTWE.

Residues 6 to 10, 11 to 13, Lys23, Ser104, Arg109, and Gly128 each bind substrate; these read LAGGL and GTR. Mg(2+) contacts are provided by Asp129 and Asp234.

Belongs to the glucose-1-phosphate cytidylyltransferase family. In terms of assembly, homohexamer. Requires Mg(2+) as cofactor.

The catalysed reaction is alpha-D-glucose 1-phosphate + CTP + H(+) = CDP-D-glucose + diphosphate. The protein operates within nucleotide-sugar biosynthesis; CDP-3,6-dideoxy-D-mannose biosynthesis; CDP-3,6-dideoxy-D-mannose from CTP and alpha-D-glucose 1-phosphate: step 1/5. It participates in bacterial outer membrane biogenesis; LPS O-antigen biosynthesis. In terms of biological role, involved in the biosynthesis of the tyvelose, a 3,6-dideoxyhexose found in the O-antigen of the surface lipopolysaccharides. It catalyzes the transfer of a CMP moiety from CTP to glucose 1-phosphate. The polypeptide is Glucose-1-phosphate cytidylyltransferase (rfbF) (Salmonella typhimurium (strain LT2 / SGSC1412 / ATCC 700720)).